The sequence spans 320 residues: Aminoacyl tRNA synthase complex-interacting multifunctional protein 2 (320 aa).

The segment at 82–162 (TPDADLDVTN…HTHSSVKSVP (81 aa)) is interaction with PRKN. The interval 162–225 (PENLLKCFGE…FLFSLFGQKH (64 aa)) is interaction with TP53. In terms of domain architecture, GST C-terminal spans 220–317 (LFGQKHNAVN…NLAPFNTALK (98 aa)).

In terms of assembly, part of the multisynthetase complex (MSC), a multisubunit complex that groups tRNA ligases for Arg (RARS1), Asp (DARS1), Gln (QARS1), Ile (IARS1), Leu (LARS1), Lys (KARS1), Met (MARS1) the bifunctional ligase for Glu and Pro (EPRS1) and the auxiliary subunits AIMP1/p43, AIMP2/p38 and EEF1E1/p18. Interacts (via N-terminus) with KARS1. Interacts with EPRS1. Forms a linear complex that contains MARS1, EEF1E1, EPRS1 and AIMP2 that is at the core of the multisubunit complex. Binds FUBP1 (via C-terminus). Interacts in both its unphosphorylated and phosphorylated forms with p53/TP53 (via N-terminus) in the nucleus following UV irradiation. Interacts (via N-terminus) with PRKN/parkin (via first RING-type domain). Interacts with TARS3. Phosphorylated on serine residues in response to UV irradiation. In terms of processing, ubiquitinated by PRKN, leading to its degradation by the proteasome. Mutant PRKN fails to ubiquitinate AIMP2 efficiently, allowing its accumulation which may contribute to neurodegeneration associated with Parkinson disease.

The protein localises to the cytoplasm. Its subcellular location is the cytosol. It localises to the nucleus. In terms of biological role, required for assembly and stability of the aminoacyl-tRNA synthase complex. Mediates ubiquitination and degradation of FUBP1, a transcriptional activator of MYC, leading to MYC down-regulation which is required for aveolar type II cell differentiation. Blocks MDM2-mediated ubiquitination and degradation of p53/TP53. Functions as a proapoptotic factor. This chain is Aminoacyl tRNA synthase complex-interacting multifunctional protein 2 (AIMP2), found in Homo sapiens (Human).